The sequence spans 230 residues: Rab15 effector protein (230 aa).

Gly-2 is lipidated: N-myristoyl glycine.

Interacts with the GTP-bound form of RAB15, RAB3A-D and RAB34.

It is found in the early endosome membrane. In terms of biological role, effector that interacts with Rab GTPases in their active form (GTP-bound) including RAB15, RAB3A-D and RAB34. Controls downstream signaling such as cell proliferation and cell migration. Also regulates transferrin receptor recycling from the endocytic recycling compartment. The sequence is that of Rab15 effector protein from Mus musculus (Mouse).